Here is an 800-residue protein sequence, read N- to C-terminus: Small ribosomal subunit protein uS3c (800 aa).

An S3-like 1st part region spans residues 1–118; sequence MGQKVHPSGF…LQVKKDILVK (118 aa). Residues 119–664 are intervening sequence (IVS); sequence LQKTRQYLTN…FLDCKFEELE (546 aa). Residues 665 to 800 form an S3-like 2nd part region; sequence RRKTMWVQNL…TKLVTESTGA (136 aa).

The protein belongs to the universal ribosomal protein uS3 family. In terms of assembly, part of the 30S ribosomal subunit.

The protein resides in the plastid. It localises to the chloroplast. This is Small ribosomal subunit protein uS3c (rps3) from Chlamydomonas moewusii (Chlamydomonas eugametos).